We begin with the raw amino-acid sequence, 224 residues long: Deoxyribose-phosphate aldolase (224 aa).

Asp-94 functions as the Proton donor/acceptor in the catalytic mechanism. Catalysis depends on Lys-156, which acts as the Schiff-base intermediate with acetaldehyde. Lys-184 serves as the catalytic Proton donor/acceptor.

Belongs to the DeoC/FbaB aldolase family. DeoC type 1 subfamily.

It is found in the cytoplasm. The catalysed reaction is 2-deoxy-D-ribose 5-phosphate = D-glyceraldehyde 3-phosphate + acetaldehyde. Its pathway is carbohydrate degradation; 2-deoxy-D-ribose 1-phosphate degradation; D-glyceraldehyde 3-phosphate and acetaldehyde from 2-deoxy-alpha-D-ribose 1-phosphate: step 2/2. Its function is as follows. Catalyzes a reversible aldol reaction between acetaldehyde and D-glyceraldehyde 3-phosphate to generate 2-deoxy-D-ribose 5-phosphate. The chain is Deoxyribose-phosphate aldolase from Methanocella arvoryzae (strain DSM 22066 / NBRC 105507 / MRE50).